The following is a 61-amino-acid chain: Metallothionein-2 (61 aa).

N-acetylmethionine is present on Met1. Residues 1 to 29 form a beta region; that stretch reads MDPNCSCASDGSCSCAGACKCKQCKCTSC. A divalent metal cation-binding residues include Cys5, Cys7, Cys13, Cys15, Cys19, Cys21, Cys24, Cys26, Cys29, Cys33, Cys34, Cys36, Cys37, Cys41, Cys44, Cys48, Cys50, and Cys57. The tract at residues 30-61 is alpha; the sequence is KKSCCSCCPVGCAKCSQGCICKEASDKCSCCA. Position 58 is a phosphoserine (Ser58). The a divalent metal cation site is built by Cys59 and Cys60.

This sequence belongs to the metallothionein superfamily. Type 1 family.

Metallothioneins have a high content of cysteine residues that bind various heavy metals; these proteins are transcriptionally regulated by both heavy metals and glucocorticoids. This Mus musculus (Mouse) protein is Metallothionein-2 (Mt2).